The following is a 211-amino-acid chain: Probable nicotinate-nucleotide adenylyltransferase (211 aa).

The protein belongs to the NadD family.

The enzyme catalyses nicotinate beta-D-ribonucleotide + ATP + H(+) = deamido-NAD(+) + diphosphate. Its pathway is cofactor biosynthesis; NAD(+) biosynthesis; deamido-NAD(+) from nicotinate D-ribonucleotide: step 1/1. Functionally, catalyzes the reversible adenylation of nicotinate mononucleotide (NaMN) to nicotinic acid adenine dinucleotide (NaAD). The protein is Probable nicotinate-nucleotide adenylyltransferase of Legionella pneumophila (strain Lens).